The primary structure comprises 558 residues: Adenine deaminase (558 aa).

Belongs to the metallo-dependent hydrolases superfamily. Adenine deaminase family. Mn(2+) is required as a cofactor.

The enzyme catalyses adenine + H2O + H(+) = hypoxanthine + NH4(+). The protein is Adenine deaminase of Methanoregula boonei (strain DSM 21154 / JCM 14090 / 6A8).